Consider the following 424-residue polypeptide: CinA-like protein (424 aa).

It belongs to the CinA family.

This Shewanella denitrificans (strain OS217 / ATCC BAA-1090 / DSM 15013) protein is CinA-like protein.